Here is a 349-residue protein sequence, read N- to C-terminus: Defect at low temperature protein 1 (349 aa).

Residues 1–18 (MPIIDFEIWKLWLFRSIK) are Cytoplasmic-facing. A helical transmembrane segment spans residues 19–39 (AIVIIFLVGFSIVLPVDSIVQ). Residues 40 to 49 (AAESSNTALN) lie on the Extracellular side of the membrane. The helical transmembrane segment at 50–70 (TFIVVGALVAFGLVSIIIIVG) threads the bilayer. Residues 71 to 349 (RIIFCRSCIQ…ADSFKYVTHR (279 aa)) lie on the Cytoplasmic side of the membrane. A disordered region spans residues 312–333 (VPTNPEEEHKMALDPQDPVSHK).

It belongs to the DLT1 family.

The protein resides in the membrane. Functionally, required for growth under high-pressure and low-temperature conditions. The sequence is that of Defect at low temperature protein 1 (DLT1) from Zygosaccharomyces rouxii (strain ATCC 2623 / CBS 732 / NBRC 1130 / NCYC 568 / NRRL Y-229).